The sequence spans 282 residues: Undecaprenyl-diphosphatase (282 aa).

6 consecutive transmembrane segments (helical) span residues 51 to 71, 87 to 107, 115 to 135, 191 to 211, 229 to 249, and 259 to 279; these read TLVAVLLYFWKDIFIIVAAVI, MGWMIVAGTIPIVIFGKLFET, SLYWISGSLIGLAIILFLAEG, ATAARFSFLLSLPAVFAAGLY, NILVATLVAGIVGYASIAFLL, and IFIAYRLVAGTAILYLVATGV.

This sequence belongs to the UppP family.

Its subcellular location is the cell inner membrane. The catalysed reaction is di-trans,octa-cis-undecaprenyl diphosphate + H2O = di-trans,octa-cis-undecaprenyl phosphate + phosphate + H(+). In terms of biological role, catalyzes the dephosphorylation of undecaprenyl diphosphate (UPP). Confers resistance to bacitracin. The polypeptide is Undecaprenyl-diphosphatase (Pelodictyon phaeoclathratiforme (strain DSM 5477 / BU-1)).